The chain runs to 488 residues: Transmembrane protein 39A (488 aa).

N-linked (GlcNAc...) asparagine glycosylation is found at Asn31 and Asn39. A run of 8 helical transmembrane segments spans residues 72–92 (SLLF…IQYI), 110–130 (TSLN…VMLA), 154–174 (VLIS…CWTL), 182–202 (SVLN…LCCF), 287–307 (EVLF…LCFV), 319–339 (CEHL…QLLP), 420–440 (LLNL…YSLL), and 446–466 (NHTL…FKLL).

It belongs to the TMEM39 family. In terms of assembly, interacts with SACM1L, SEC23A and SEC24A.

It localises to the endoplasmic reticulum membrane. Functionally, regulates autophagy by controlling the spatial distribution and levels of the intracellular phosphatidylinositol 4-phosphate (PtdIns(4)P) pools. Modulates (PtdIns(4)P) levels by regulating the ER-to-Golgi trafficking of the phosphatidylinositide phosphatase SACM1L. The protein is Transmembrane protein 39A (TMEM39A) of Bos taurus (Bovine).